The primary structure comprises 276 residues: Diaminopimelate epimerase (276 aa).

Positions 13, 46, and 66 each coordinate substrate. The active-site Proton donor is the Cys-75. Substrate contacts are provided by residues 76-77 (GN), Asn-159, Asn-192, and 210-211 (ER). Cys-219 (proton acceptor) is an active-site residue. 220–221 (GS) lines the substrate pocket.

This sequence belongs to the diaminopimelate epimerase family. As to quaternary structure, homodimer.

It localises to the cytoplasm. The catalysed reaction is (2S,6S)-2,6-diaminopimelate = meso-2,6-diaminopimelate. It functions in the pathway amino-acid biosynthesis; L-lysine biosynthesis via DAP pathway; DL-2,6-diaminopimelate from LL-2,6-diaminopimelate: step 1/1. In terms of biological role, catalyzes the stereoinversion of LL-2,6-diaminopimelate (L,L-DAP) to meso-diaminopimelate (meso-DAP), a precursor of L-lysine and an essential component of the bacterial peptidoglycan. The sequence is that of Diaminopimelate epimerase from Vibrio parahaemolyticus serotype O3:K6 (strain RIMD 2210633).